The sequence spans 118 residues: Small ribosomal subunit protein uS19c (118 aa).

The interval 92–118 (KKSSKKVTKNKKSIKKNIKTTSKKFKK) is disordered.

The protein belongs to the universal ribosomal protein uS19 family.

It is found in the plastid. Functionally, protein S19 forms a complex with S13 that binds strongly to the 16S ribosomal RNA. The protein is Small ribosomal subunit protein uS19c (rps19) of Euglena longa (Euglenophycean alga).